The primary structure comprises 126 residues: Fluoride-specific ion channel FluC (126 aa).

4 consecutive transmembrane segments (helical) span residues Pro-4–Leu-24, Ile-33–Ala-53, Phe-67–Val-87, and Met-97–Leu-117. Positions 74 and 77 each coordinate Na(+).

It belongs to the fluoride channel Fluc/FEX (TC 1.A.43) family.

Its subcellular location is the cell inner membrane. The enzyme catalyses fluoride(in) = fluoride(out). With respect to regulation, na(+) is not transported, but it plays an essential structural role and its presence is essential for fluoride channel function. Its function is as follows. Fluoride-specific ion channel. Important for reducing fluoride concentration in the cell, thus reducing its toxicity. The polypeptide is Fluoride-specific ion channel FluC (Acinetobacter baumannii (strain ATCC 17978 / DSM 105126 / CIP 53.77 / LMG 1025 / NCDC KC755 / 5377)).